The following is a 180-amino-acid chain: Required for excision 1-B domain-containing protein (180 aa).

The tract at residues 1–23 (MITAEAASESTVPAVPGDTAATG) is disordered.

The chain is Required for excision 1-B domain-containing protein from Bos taurus (Bovine).